The sequence spans 354 residues: UDP-3-O-acylglucosamine N-acyltransferase (354 aa).

The Proton acceptor role is filled by histidine 247.

The protein belongs to the transferase hexapeptide repeat family. LpxD subfamily. Homotrimer.

The enzyme catalyses a UDP-3-O-[(3R)-3-hydroxyacyl]-alpha-D-glucosamine + a (3R)-hydroxyacyl-[ACP] = a UDP-2-N,3-O-bis[(3R)-3-hydroxyacyl]-alpha-D-glucosamine + holo-[ACP] + H(+). The protein operates within bacterial outer membrane biogenesis; LPS lipid A biosynthesis. Functionally, catalyzes the N-acylation of UDP-3-O-acylglucosamine using 3-hydroxyacyl-ACP as the acyl donor. Is involved in the biosynthesis of lipid A, a phosphorylated glycolipid that anchors the lipopolysaccharide to the outer membrane of the cell. In Chlamydia trachomatis serovar A (strain ATCC VR-571B / DSM 19440 / HAR-13), this protein is UDP-3-O-acylglucosamine N-acyltransferase.